The following is a 444-amino-acid chain: Exodeoxyribonuclease 7 large subunit (444 aa).

This sequence belongs to the XseA family. In terms of assembly, heterooligomer composed of large and small subunits.

It is found in the cytoplasm. The enzyme catalyses Exonucleolytic cleavage in either 5'- to 3'- or 3'- to 5'-direction to yield nucleoside 5'-phosphates.. Its function is as follows. Bidirectionally degrades single-stranded DNA into large acid-insoluble oligonucleotides, which are then degraded further into small acid-soluble oligonucleotides. The chain is Exodeoxyribonuclease 7 large subunit from Rickettsia akari (strain Hartford).